The sequence spans 115 residues: Large ribosomal subunit protein eL36 (115 aa).

This sequence belongs to the eukaryotic ribosomal protein eL36 family. In terms of assembly, component of the large ribosomal subunit.

It localises to the cytoplasm. Its subcellular location is the cytosol. In terms of biological role, component of the large ribosomal subunit. This chain is Large ribosomal subunit protein eL36 (RpL36), found in Drosophila melanogaster (Fruit fly).